Reading from the N-terminus, the 103-residue chain is N(4)-acetylcytidine amidohydrolase (103 aa).

Positions 6–100 (ITFFQRFQND…NQMQFYVIDF (95 aa)) constitute an ASCH domain. Catalysis depends on lysine 21, which acts as the Proton acceptor. Catalysis depends on threonine 24, which acts as the Nucleophile. Glutamate 74 acts as the Proton donor in catalysis.

The protein belongs to the N(4)-acetylcytidine amidohydrolase family.

It carries out the reaction N(4)-acetylcytidine + H2O = cytidine + acetate + H(+). The catalysed reaction is N(4)-acetyl-2'-deoxycytidine + H2O = 2'-deoxycytidine + acetate + H(+). The enzyme catalyses N(4)-acetylcytosine + H2O = cytosine + acetate + H(+). In terms of biological role, catalyzes the hydrolysis of N(4)-acetylcytidine (ac4C). The polypeptide is N(4)-acetylcytidine amidohydrolase (yqfB) (Salmonella arizonae (strain ATCC BAA-731 / CDC346-86 / RSK2980)).